A 106-amino-acid polypeptide reads, in one-letter code: N(4)-acetylcytidine amidohydrolase (106 aa).

The region spanning threonine 9–isoleucine 105 is the ASCH domain. Residue lysine 23 is the Proton acceptor of the active site. The active-site Nucleophile is the threonine 26. The Proton donor role is filled by glutamate 76.

The protein belongs to the N(4)-acetylcytidine amidohydrolase family.

The enzyme catalyses N(4)-acetylcytidine + H2O = cytidine + acetate + H(+). It carries out the reaction N(4)-acetyl-2'-deoxycytidine + H2O = 2'-deoxycytidine + acetate + H(+). It catalyses the reaction N(4)-acetylcytosine + H2O = cytosine + acetate + H(+). Functionally, catalyzes the hydrolysis of N(4)-acetylcytidine (ac4C). This is N(4)-acetylcytidine amidohydrolase from Vibrio campbellii (strain ATCC BAA-1116).